We begin with the raw amino-acid sequence, 957 residues long: Glycine dehydrogenase (decarboxylating) 2 (957 aa).

Position 707 is an N6-(pyridoxal phosphate)lysine (Lys-707).

It belongs to the GcvP family. In terms of assembly, the glycine cleavage system is composed of four proteins: P, T, L and H. Requires pyridoxal 5'-phosphate as cofactor.

It carries out the reaction N(6)-[(R)-lipoyl]-L-lysyl-[glycine-cleavage complex H protein] + glycine + H(+) = N(6)-[(R)-S(8)-aminomethyldihydrolipoyl]-L-lysyl-[glycine-cleavage complex H protein] + CO2. In terms of biological role, the glycine cleavage system catalyzes the degradation of glycine. The P protein binds the alpha-amino group of glycine through its pyridoxal phosphate cofactor; CO(2) is released and the remaining methylamine moiety is then transferred to the lipoamide cofactor of the H protein. The protein is Glycine dehydrogenase (decarboxylating) 2 of Pseudomonas fluorescens (strain Pf0-1).